A 174-amino-acid polypeptide reads, in one-letter code: Small t antigen (174 aa).

N-acetylmethionine; by host is present on Met-1. The J domain occupies Gln-12–Gly-75. The C4-type; atypical zinc finger occupies Cys-103–Cys-116. The H1C3-type; atypical zinc-finger motif lies at His-122–Cys-143.

As to quaternary structure, interacts with host PPP2R1A; the interaction inhibits PP2A activity.

It localises to the host cytoplasm. The protein localises to the host nucleus. Its function is as follows. Promotes efficient viral genome replication by accelerating both G1 and S phase progression of the cell cycle. Inhibits host PP2A by binding to the A subunit, thereby displacing lower affinity regulatory B subunit. Inactivation of PP2A in turn results in the transactivation of cyclin A and cyclin D1 promoters. Late during the infection cycle, ST may induce dephosphorylation of host eIF4E-binding protein EIF4EBP1 leading to the inhibition of cap-dependent translation. May establish and maintain high levels of viral genomes during persistent infection in cell culture. The protein is Small t antigen of Simian virus 40 (SV40).